We begin with the raw amino-acid sequence, 412 residues long: 8-amino-7-oxononanoate synthase (412 aa).

106–107 (GY) provides a ligand contact to pyridoxal 5'-phosphate. His-131 contacts substrate. Positions 187, 219, and 247 each coordinate pyridoxal 5'-phosphate. Position 250 is an N6-(pyridoxal phosphate)lysine (Lys-250). Thr-370 serves as a coordination point for substrate.

It belongs to the class-II pyridoxal-phosphate-dependent aminotransferase family. BioF subfamily. In terms of assembly, homodimer. Pyridoxal 5'-phosphate serves as cofactor.

The catalysed reaction is 6-carboxyhexanoyl-[ACP] + L-alanine + H(+) = (8S)-8-amino-7-oxononanoate + holo-[ACP] + CO2. Its pathway is cofactor biosynthesis; biotin biosynthesis. In terms of biological role, 8-amino-7-oxononanoate synthase; part of the cluster involved in the biosynthesis of biotin (also known as vitamin B8 or vitamin H), a water-soluble vitamin that functions as a prosthetic group of many carboxylases, such as acetyl-CoA carboxylase and pyruvate carboxylase. Catalyzes the decarboxylative condensation of pimeloyl-[acyl-carrier protein] and L-alanine to produce 8-amino-7-oxononanoate (AON). This chain is 8-amino-7-oxononanoate synthase, found in Emericella nidulans (strain FGSC A4 / ATCC 38163 / CBS 112.46 / NRRL 194 / M139) (Aspergillus nidulans).